A 450-amino-acid polypeptide reads, in one-letter code: Pancreatic triacylglycerol lipase (450 aa).

Cystine bridges form between cysteine 4–cysteine 10, cysteine 91–cysteine 102, and cysteine 91–cysteine 104. Serine 153 (nucleophile) is an active-site residue. Residue asparagine 167 is glycosylated (N-linked (GlcNAc...) asparagine). Residue aspartate 177 is the Charge relay system of the active site. The Ca(2+) site is built by glutamate 188, arginine 191, aspartate 193, and aspartate 196. Cysteine 238 and cysteine 262 are oxidised to a cystine. The active-site Charge relay system is histidine 264. 3 cysteine pairs are disulfide-bonded: cysteine 286/cysteine 297, cysteine 300/cysteine 305, and cysteine 434/cysteine 450. The PLAT domain maps to 339–450; the sequence is WRYKVSVTLS…EEVLLTLNPC (112 aa).

It belongs to the AB hydrolase superfamily. Lipase family. Forms a 1:1 stoichiometric complex with (pro)colipase/CLPS.

The protein localises to the secreted. It carries out the reaction a triacylglycerol + H2O = a diacylglycerol + a fatty acid + H(+). It catalyses the reaction 1,2,3-tributanoylglycerol + H2O = dibutanoylglycerol + butanoate + H(+). The enzyme catalyses 1,2,3-tri-(9Z-octadecenoyl)-glycerol + H2O = di-(9Z)-octadecenoylglycerol + (9Z)-octadecenoate + H(+). The catalysed reaction is all-trans-retinyl hexadecanoate + H2O = all-trans-retinol + hexadecanoate + H(+). It carries out the reaction 1,2-di-(9Z-octadecenoyl)-glycerol + H2O = (9Z-octadecenoyl)-glycerol + (9Z)-octadecenoate + H(+). With respect to regulation, inhibited by bile salts, is reactivated by (pro)colipase/CLPS. Plays an important role in fat metabolism. It preferentially splits the esters of long-chain fatty acids at positions 1 and 3, producing mainly 2-monoacylglycerol and free fatty acids, and shows considerably higher activity against insoluble emulsified substrates than against soluble ones. This Sus scrofa (Pig) protein is Pancreatic triacylglycerol lipase (PNLIP).